We begin with the raw amino-acid sequence, 226 residues long: UPF0319 protein YpAngola_A3206 (226 aa).

A signal peptide spans 1-20 (MKLGLVAGMLAVCFSFSSVA).

This sequence belongs to the UPF0319 family.

This is UPF0319 protein YpAngola_A3206 from Yersinia pestis bv. Antiqua (strain Angola).